A 345-amino-acid polypeptide reads, in one-letter code: Uroporphyrinogen decarboxylase (345 aa).

Residues 27–31 (RQAGR), phenylalanine 46, aspartate 76, tyrosine 152, serine 207, and histidine 321 each bind substrate.

It belongs to the uroporphyrinogen decarboxylase family. In terms of assembly, homodimer.

It localises to the cytoplasm. It catalyses the reaction uroporphyrinogen III + 4 H(+) = coproporphyrinogen III + 4 CO2. It participates in porphyrin-containing compound metabolism; protoporphyrin-IX biosynthesis; coproporphyrinogen-III from 5-aminolevulinate: step 4/4. Catalyzes the decarboxylation of four acetate groups of uroporphyrinogen-III to yield coproporphyrinogen-III. In Staphylococcus aureus (strain MRSA252), this protein is Uroporphyrinogen decarboxylase.